We begin with the raw amino-acid sequence, 67 residues long: Toxin Cex8 (67 aa).

A signal peptide is located at residue Ala-1. An LCN-type CS-alpha/beta domain is found at 2–65 (KEGYLVNIYT…SYPYPEKSCG (64 aa)). 4 cysteine pairs are disulfide-bonded: Cys-13–Cys-64, Cys-17–Cys-40, Cys-26–Cys-45, and Cys-30–Cys-47. Position 64 is a cysteine amide (Cys-64). The propeptide occupies 65 to 67 (GRK).

It belongs to the long (4 C-C) scorpion toxin superfamily. Sodium channel inhibitor family. Beta subfamily. Expressed by the venom gland.

The protein localises to the secreted. In terms of biological role, beta toxins bind voltage-independently at site-4 of sodium channels (Nav) and shift the voltage of activation toward more negative potentials thereby affecting sodium channel activation and promoting spontaneous and repetitive firing. In Centruroides exilicauda (Bark scorpion), this protein is Toxin Cex8.